Reading from the N-terminus, the 431-residue chain is POU domain, class 2, transcription factor 3 (431 aa).

Disordered regions lie at residues 1–39 (MVNL…RNGL), 130–180 (LLPQ…EPTD), and 248–267 (DAES…YPTL). A POU-specific domain is found at 176-250 (DEPTDLEELE…LLEKWLNDAE (75 aa)). The span at 251–267 (SSPSDPSASTPSSYPTL) shows a compositional bias: low complexity. A DNA-binding region (homeobox) is located at residues 274–333 (KRKKRTSIETNIRLTLEKRFQDNPKPSSEEISMIAEQLSMEKEVVRVWFCNRRQKEKRIN). Low complexity-rich tracts occupy residues 352 to 364 (PSGS…VPPV), 374 to 390 (SSCS…PGSG), and 398 to 419 (ASQN…NSSG). Positions 352 to 419 (PSGSLGPLSV…SSSSSFNSSG (68 aa)) are disordered.

This sequence belongs to the POU transcription factor family. Class-2 subfamily. In terms of assembly, interacts (via the POU domain) with POU2AF1 and POU2AF2 in a DNA-dependent manner; this interaction recruits POU2AF2 to chromatin and increases POU2F3 transactivation activity. As to expression, skin, thymus, stomach and testis.

It is found in the nucleus. Functionally, transcription factor that binds to the octamer motif (5'-ATTTGCAT-3'). Regulates cell type-specific differentiation pathways. Involved in the regulation of keratinocytes differentiation. The POU2F3-POU2AF2/POU2AF3 complex drives the expression of tuft-cell-specific genes, a rare chemosensory cells that coordinate immune and neural functions within mucosal epithelial tissues. The polypeptide is POU domain, class 2, transcription factor 3 (Pou2f3) (Mus musculus (Mouse)).